We begin with the raw amino-acid sequence, 305 residues long: Pseudouridine-5'-phosphate glycosidase (305 aa).

The Proton donor role is filled by E22. Residues K84 and V104 each contribute to the substrate site. D136 is a binding site for Mn(2+). 138–140 contacts substrate; it reads SAD. K157 serves as the catalytic Nucleophile.

This sequence belongs to the pseudouridine-5'-phosphate glycosidase family. Homotrimer. It depends on Mn(2+) as a cofactor.

The catalysed reaction is D-ribose 5-phosphate + uracil = psi-UMP + H2O. Its function is as follows. Catalyzes the reversible cleavage of pseudouridine 5'-phosphate (PsiMP) to ribose 5-phosphate and uracil. Functions biologically in the cleavage direction, as part of a pseudouridine degradation pathway. This Chloroflexus aurantiacus (strain ATCC 29364 / DSM 637 / Y-400-fl) protein is Pseudouridine-5'-phosphate glycosidase.